We begin with the raw amino-acid sequence, 329 residues long: tRNA pseudouridine synthase B (329 aa).

Histidine 43 lines the substrate pocket. Aspartate 48 acts as the Nucleophile in catalysis. Residues tyrosine 76, tyrosine 179, and leucine 200 each coordinate substrate.

It belongs to the pseudouridine synthase TruB family. Type 1 subfamily.

It carries out the reaction uridine(55) in tRNA = pseudouridine(55) in tRNA. Responsible for synthesis of pseudouridine from uracil-55 in the psi GC loop of transfer RNAs. This is tRNA pseudouridine synthase B from Yersinia enterocolitica serotype O:8 / biotype 1B (strain NCTC 13174 / 8081).